An 89-amino-acid chain; its full sequence is Small ribosomal subunit protein uS14A (89 aa).

It belongs to the universal ribosomal protein uS14 family. In terms of assembly, part of the 30S ribosomal subunit. Contacts proteins S3 and S10.

Functionally, binds 16S rRNA, required for the assembly of 30S particles and may also be responsible for determining the conformation of the 16S rRNA at the A site. The sequence is that of Small ribosomal subunit protein uS14A from Listeria welshimeri serovar 6b (strain ATCC 35897 / DSM 20650 / CCUG 15529 / CIP 8149 / NCTC 11857 / SLCC 5334 / V8).